Reading from the N-terminus, the 362-residue chain is MTRAFLRSGYTTGACAAAAAKGAAEMLRDGQVIDRVEIILPGGELVPFTLRNQQLGDKFASCSVIKDAGDDPDITNGAEINVSLTIEPAPPGTKGEIAVSGGTGIGKVTKPGLAVPVGEWAINPVPRKMIRVVINEVFAIRCVPSLMKVTVSIPNGEELAKKTLNARLGIIGGLSILGTTGIVKPISAKAWTDTIDAAIDVALACGSKTLILSTGRTSELVAERHLQLGKLTQEEAFIMMGDHVGYALKTCAAKGVREIVIAGQFAKLLKVACGHEQTHVSSSELDLQQLVSWLGPDPRTSGLVLLARRANTARQVLEESGNDPVLMAAVCERVKGFAARLVQESSIKVLLAGYGQEVLYFG.

Belongs to the CbiD family.

The enzyme catalyses Co-precorrin-5B + S-adenosyl-L-methionine = Co-precorrin-6A + S-adenosyl-L-homocysteine. Its pathway is cofactor biosynthesis; adenosylcobalamin biosynthesis; cob(II)yrinate a,c-diamide from sirohydrochlorin (anaerobic route): step 6/10. Functionally, catalyzes the methylation of C-1 in cobalt-precorrin-5B to form cobalt-precorrin-6A. The sequence is that of Cobalt-precorrin-5B C(1)-methyltransferase from Geotalea daltonii (strain DSM 22248 / JCM 15807 / FRC-32) (Geobacter daltonii).